Consider the following 213-residue polypeptide: Glycerol-3-phosphate acyltransferase (213 aa).

6 consecutive transmembrane segments (helical) span residues 3 to 23, 55 to 75, 80 to 100, 110 to 130, 142 to 162, and 163 to 183; these read ILLL…LWIG, ITFL…IWLG, SPLI…FTGF, AGVL…VFAL, SITA…IHFL, and LDGY…VIIF.

Belongs to the PlsY family. As to quaternary structure, probably interacts with PlsX.

The protein resides in the cell membrane. The catalysed reaction is an acyl phosphate + sn-glycerol 3-phosphate = a 1-acyl-sn-glycero-3-phosphate + phosphate. It functions in the pathway lipid metabolism; phospholipid metabolism. Catalyzes the transfer of an acyl group from acyl-phosphate (acyl-PO(4)) to glycerol-3-phosphate (G3P) to form lysophosphatidic acid (LPA). This enzyme utilizes acyl-phosphate as fatty acyl donor, but not acyl-CoA or acyl-ACP. The polypeptide is Glycerol-3-phosphate acyltransferase (Streptococcus thermophilus (strain CNRZ 1066)).